A 490-amino-acid polypeptide reads, in one-letter code: Betaine aldehyde dehydrogenase (490 aa).

Thr-26, Ile-27, and Asp-93 together coordinate K(+). 150–152 is an NAD(+) binding site; that stretch reads GAW. The active-site Charge relay system is the Lys-162. 176–179 contacts NAD(+); it reads KPSE. Val-180 serves as a coordination point for K(+). Position 230–233 (230–233) interacts with NAD(+); that stretch reads GVAS. Leu-246 contributes to the K(+) binding site. Glu-252 serves as the catalytic Proton acceptor. NAD(+) contacts are provided by Gly-254, Cys-286, and Glu-387. The active-site Nucleophile is Cys-286. At Cys-286 the chain carries Cysteine sulfenic acid (-SOH). Lys-457 and Gly-460 together coordinate K(+). Glu-464 serves as the catalytic Charge relay system.

This sequence belongs to the aldehyde dehydrogenase family. In terms of assembly, dimer of dimers. Requires K(+) as cofactor.

The catalysed reaction is betaine aldehyde + NAD(+) + H2O = glycine betaine + NADH + 2 H(+). Its pathway is amine and polyamine biosynthesis; betaine biosynthesis via choline pathway; betaine from betaine aldehyde: step 1/1. Functionally, involved in the biosynthesis of the osmoprotectant glycine betaine. Catalyzes the irreversible oxidation of betaine aldehyde to the corresponding acid. This is Betaine aldehyde dehydrogenase from Escherichia coli (strain K12 / DH10B).